The primary structure comprises 33 residues: MNLEIVAQLTVLALIVVSGPLVIALLAVRKGNL.

Residues Ile5–Leu25 traverse the membrane as a helical segment.

This sequence belongs to the Psb30/Ycf12 family. As to quaternary structure, PSII is composed of 1 copy each of membrane proteins PsbA, PsbB, PsbC, PsbD, PsbE, PsbF, PsbH, PsbI, PsbJ, PsbK, PsbL, PsbM, PsbT, PsbX, PsbY, PsbZ, Psb30/Ycf12, peripheral proteins of the oxygen-evolving complex and a large number of cofactors. It forms dimeric complexes.

The protein resides in the plastid. It localises to the chloroplast thylakoid membrane. A core subunit of photosystem II (PSII), probably helps stabilize the reaction center. The protein is Photosystem II reaction center protein Psb30 of Angiopteris evecta (Mule's foot fern).